Reading from the N-terminus, the 118-residue chain is Alpha-amylase inhibitor 4 (118 aa).

Intrachain disulfides connect Cys-7/Cys-60, Cys-21/Cys-49, Cys-30/Cys-82, and Cys-50/Cys-101.

This sequence belongs to the protease inhibitor I6 (cereal trypsin/alpha-amylase inhibitor) family.

It is found in the secreted. Its function is as follows. Alpha-amylase inhibitor. The sequence is that of Alpha-amylase inhibitor 4 from Sorghum bicolor (Sorghum).